The chain runs to 612 residues: Elongation factor 4 (612 aa).

The region spanning 11 to 193 (KHIRNFSIVA…EIVKKVPAPD (183 aa)) is the tr-type G domain. GTP contacts are provided by residues 23–28 (DHGKST) and 140–143 (NKID).

The protein belongs to the TRAFAC class translation factor GTPase superfamily. Classic translation factor GTPase family. LepA subfamily.

Its subcellular location is the cell membrane. The enzyme catalyses GTP + H2O = GDP + phosphate + H(+). Required for accurate and efficient protein synthesis under certain stress conditions. May act as a fidelity factor of the translation reaction, by catalyzing a one-codon backward translocation of tRNAs on improperly translocated ribosomes. Back-translocation proceeds from a post-translocation (POST) complex to a pre-translocation (PRE) complex, thus giving elongation factor G a second chance to translocate the tRNAs correctly. Binds to ribosomes in a GTP-dependent manner. This is Elongation factor 4 from Lactobacillus johnsonii (strain CNCM I-12250 / La1 / NCC 533).